We begin with the raw amino-acid sequence, 159 residues long: Ecotin (159 aa).

An N-terminal signal peptide occupies residues 1–22; sequence MRPTPMTAILALTLAAAAPAMA. A disulfide bridge connects residues Cys68 and Cys105.

This sequence belongs to the protease inhibitor I11 (ecotin) family. Homodimer.

The protein localises to the periplasm. Functionally, general inhibitor of family S1 serine proteases. This is Ecotin from Pseudomonas putida (strain GB-1).